The primary structure comprises 862 residues: C-type lectin domain-containing protein 161 (862 aa).

The first 20 residues, 1-20 (MYRRTTLWFLLLFQPILVFA), serve as a signal peptide directing secretion. Residues N22 and N91 are each glycosylated (N-linked (GlcNAc...) asparagine). In terms of domain architecture, C-type lectin 1 spans 41–154 (SLNACFKLYN…VGQKLPFVCT (114 aa)). A disulfide bond links C62 and C153. Positions 162-291 (AGPAPVHAMR…SDESSDEAYD (130 aa)) are disordered. The segment covering 198-218 (SDKKEKKEVASDKKKESKKDE) has biased composition (basic and acidic residues). A glycan (N-linked (GlcNAc...) asparagine) is linked at N222. Over residues 242-252 (SDKKESSKKDE) the composition is skewed to basic and acidic residues. N258, N279, and N352 each carry an N-linked (GlcNAc...) asparagine glycan. Positions 265–283 (ANAEMSASISASSANSSSD) are enriched in low complexity. 3 disordered regions span residues 377–437 (MTMR…SASL), 450–469 (ALASKSKSDSSDQSKDQKSA), and 474–504 (AVVSENKHPTKKPEDPKSTKTTTEEPDIDES). Over residues 388 to 418 (SSSNTDSESASISESSQASEQAVMAAAMSAK) the composition is skewed to low complexity. Composition is skewed to basic and acidic residues over residues 455–467 (SKSDSSDQSKDQK) and 478–491 (ENKHPTKKPEDPKS). N559 carries N-linked (GlcNAc...) asparagine glycosylation. C-type lectin domains lie at 562–687 (APAL…SVLC) and 716–828 (KNGK…FVSV). C653 and C678 are disulfide-bonded. A glycan (N-linked (GlcNAc...) asparagine) is linked at N765. An intrachain disulfide couples C807 to C819. N-linked (GlcNAc...) asparagine glycans are attached at residues N831 and N857.

It is found in the secreted. This Caenorhabditis elegans protein is C-type lectin domain-containing protein 161 (clec-161).